The sequence spans 127 residues: Large ribosomal subunit protein uL18 (127 aa).

The protein belongs to the universal ribosomal protein uL18 family. In terms of assembly, part of the 50S ribosomal subunit; part of the 5S rRNA/L5/L18/L25 subcomplex. Contacts the 5S and 23S rRNAs.

In terms of biological role, this is one of the proteins that bind and probably mediate the attachment of the 5S RNA into the large ribosomal subunit, where it forms part of the central protuberance. This chain is Large ribosomal subunit protein uL18, found in Streptomyces avermitilis (strain ATCC 31267 / DSM 46492 / JCM 5070 / NBRC 14893 / NCIMB 12804 / NRRL 8165 / MA-4680).